The chain runs to 729 residues: uncharacterized protein (729 aa).

Belongs to the mimivirus L515/L516 family.

The protein localises to the virion. This is an uncharacterized protein from Acanthamoeba polyphaga mimivirus (APMV).